A 627-amino-acid polypeptide reads, in one-letter code: ATP-dependent zinc metalloprotease FtsH 2 (627 aa).

Residues 1–7 (MKFSWRT) lie on the Cytoplasmic side of the membrane. A helical transmembrane segment spans residues 8-28 (ALLWSLPLLVVGFFFWQGSFG). Topologically, residues 29–117 (GADANLGSNT…SHPVRNNGMV (89 aa)) are lumenal. Residues 118-138 (WGFVGNLIFPVLLIASLFFLF) traverse the membrane as a helical segment. Over 139 to 627 (RRSSNMPGGP…PVKEQLIPQL (489 aa)) the chain is Cytoplasmic. Residue 212-219 (GPPGTGKT) coordinates ATP. Residue His433 coordinates Zn(2+). Glu434 is a catalytic residue. Residues His437 and Asp511 each contribute to the Zn(2+) site.

It in the central section; belongs to the AAA ATPase family. In the C-terminal section; belongs to the peptidase M41 family. In terms of assembly, homohexamer (Potential). Part of a large (&gt;500 kDa) complex that includes FtsH3 and PSII. Coimmunoprecipitates with YidC. It depends on Zn(2+) as a cofactor.

The protein localises to the cellular thylakoid membrane. In terms of biological role, acts as a processive, ATP-dependent zinc metallopeptidase for both cytoplasmic and membrane proteins. Plays a role in the quality control of integral membrane proteins. Plays a role in the selective replacement of photosystem II (PSII) protein D1 in the PSII repair cycle following visible-light and UV-B induced damage. If damaged D1 is not removed then new D1 cannot be inserted to restore the PSII reaction center. Seems to also degrade damaged and/or unassembled PSII proteins D2 and PsbB (CP47). May recognize D1 via its first 20 amino acids, as deletion of these prevents the PSII repair cycle. Also seems to degrade cytoplasmic GGPS, glucosylglycerol-phosphate synthase. The polypeptide is ATP-dependent zinc metalloprotease FtsH 2 (ftsH2) (Synechocystis sp. (strain ATCC 27184 / PCC 6803 / Kazusa)).